The sequence spans 192 residues: Ras-like GTP-binding protein O-RHO (192 aa).

A GTP-binding site is contributed by 12–19 (GDGACGKT). The short motif at 34 to 42 (YVPTVFENY) is the Effector region element. GTP contacts are provided by residues 59 to 63 (DTAGQ) and 117 to 120 (NKKT). Cysteine 189 is subject to Cysteine methyl ester. Residue cysteine 189 is the site of S-geranylgeranyl cysteine attachment. Residues 190–192 (LLL) constitute a propeptide, removed in mature form.

The protein belongs to the small GTPase superfamily. Rho family.

Its subcellular location is the cell membrane. This chain is Ras-like GTP-binding protein O-RHO, found in Diplobatis ommata (Ocellated electric ray).